Consider the following 100-residue polypeptide: ATP phosphoribosyltransferase (100 aa).

It belongs to the ATP phosphoribosyltransferase family. Long subfamily. As to quaternary structure, equilibrium between an active dimeric form, an inactive hexameric form and higher aggregates. Interconversion between the various forms is largely reversible and is influenced by the natural substrates and inhibitors of the enzyme. Requires Mg(2+) as cofactor.

It is found in the cytoplasm. It carries out the reaction 1-(5-phospho-beta-D-ribosyl)-ATP + diphosphate = 5-phospho-alpha-D-ribose 1-diphosphate + ATP. Its pathway is amino-acid biosynthesis; L-histidine biosynthesis; L-histidine from 5-phospho-alpha-D-ribose 1-diphosphate: step 1/9. Feedback inhibited by histidine. Its function is as follows. Catalyzes the condensation of ATP and 5-phosphoribose 1-diphosphate to form N'-(5'-phosphoribosyl)-ATP (PR-ATP). Has a crucial role in the pathway because the rate of histidine biosynthesis seems to be controlled primarily by regulation of HisG enzymatic activity. This chain is ATP phosphoribosyltransferase (hisG), found in Klebsiella pneumoniae.